The sequence spans 308 residues: Cell division protein FtsQ (308 aa).

Residues 1-53 (MDSGGRIVYALNVEKTGFLRILSVTVLQRLYRRVFWFLFKCVAGIDVPRHAGS) are Cytoplasmic-facing. The chain crosses the membrane as a helical span at residues 54–74 (LAVFSFFFLSILYSISSGGYM). The Periplasmic segment spans residues 75 to 308 (NHFMKVAISN…LLKMLKAGSV (234 aa)). The region spanning 87-155 (FLVTHVDMSG…DRLRISLVER (69 aa)) is the POTRA domain.

This sequence belongs to the FtsQ/DivIB family. FtsQ subfamily.

The protein localises to the cell inner membrane. Its function is as follows. Essential cell division protein. The sequence is that of Cell division protein FtsQ from Bartonella bacilliformis.